Here is a 508-residue protein sequence, read N- to C-terminus: Cytochrome P450 monooxygenase dmxR5 (508 aa).

The helical transmembrane segment at 24 to 44 (LTLGLGAILVVLMSFLAFLSY) threads the bilayer. 2 N-linked (GlcNAc...) asparagine glycosylation sites follow: Asn-387 and Asn-405. Cys-451 contacts heme. An N-linked (GlcNAc...) asparagine glycan is attached at Asn-462. The segment at 481-508 (EHKKSTQESGHGVPLPSKLSKFSPREEN) is disordered.

It belongs to the cytochrome P450 family. Heme serves as cofactor.

It localises to the membrane. Its pathway is secondary metabolite biosynthesis. Cytochrome P450 monooxygenase; part of the gene cluster that mediates the biosynthesis of the dimeric xanthones cryptosporioptides. The pathway begins with the synthesis of atrochrysone thioester by the polyketide synthase dmx-nrPKS. The atrochrysone carboxyl ACP thioesterase dmxR1 then breaks the thioester bond and releases the atrochrysone carboxylic acid from dmx-nrPKS. Atrochrysone carboxylic acid is decarboxylated by the decarboxylase dmxR15, and oxidized by the anthrone oxygenase dmxR16 to yield emodin. Emodin is then reduced to emodin hydroquinone by the oxidoreductase dmxR7. A-ring reduction by the short chain dehydrogenase dmxR18, dehydration by the scytalone dehydratase-like protein dmxR17 and probable spontaneous re-oxidation, results in overall deoxygenation to chrysophanol. Baeyer-Villiger oxidation by the Baeyer-Villiger monooxygenase (BVMO) dmxR6 then yields monodictylactone in equilibrium with monodictyphenone. In the case of the cryptosporioptides biosynthesis, monodictylactone is reduced at C-12 to an alcohol (by the short chain dehydrogenases dmxR12 or dmxR8) and hydroxylated at C-5 by dmxR9, yielding the electron-rich aromatic which could eliminate H(2)O to form the ortho-quinonemethide, followed by tautomerisation to paraquinone and complete the formal reduction to produce the 10-methylgroup. Conjugate addition of C-4a-OH to the resulting paraquinone by the monooxygenase dmxR10 then gives cyclohexadienone, which is then reduced at C-5 by the short chain dehydrogenase dmxR3 to give the dihydroxanthone. The 6,7-epoxide in the cryptosporioptides could be introduced by the cytochrome P450 monooxygenase dmxL3. The highly reducing PKS dmxL2 manufactures butyrate, which is further carboxylated by dmxL1 to form ethylmalonate. It is not yet clear whether the carboxylation occurs while the butyrate is attached to the ACP of dmxL2, but this unusual fungal metabolite could then be esterified to O-5 by the O-acetyltransferase dmxR13. Finally, dimerization performed by dmxR5 gives the observed dimers cryptosporioptides A, B and C as the final products of the pathway. The sequence is that of Cytochrome P450 monooxygenase dmxR5 from Cryptosporiopsis sp. (strain 8999).